The sequence spans 367 residues: Multifunctional tryptophan biosynthesis protein (367 aa).

The 195-residue stretch at 7 to 201 folds into the Glutamine amidotransferase type-1 domain; the sequence is NVVMIDNYDS…LNVSGGYWEE (195 aa). 58–60 contributes to the L-glutamine binding site; it reads GPG. Cys86 acts as the Nucleophile; for GATase activity in catalysis. L-glutamine contacts are provided by residues Gln90 and 136-137; that span reads SL. Residues His175 and Glu177 each act as for GATase activity in the active site. Residues 209 to 367 form an indole-3-glycerol phosphate synthase region; the sequence is RKESILEKIY…TVLLIVKMLS (159 aa).

In terms of assembly, tetramer of two components I and two components II.

It carries out the reaction chorismate + L-glutamine = anthranilate + pyruvate + L-glutamate + H(+). The catalysed reaction is 1-(2-carboxyphenylamino)-1-deoxy-D-ribulose 5-phosphate + H(+) = (1S,2R)-1-C-(indol-3-yl)glycerol 3-phosphate + CO2 + H2O. The protein operates within amino-acid biosynthesis; L-tryptophan biosynthesis; L-tryptophan from chorismate: step 1/5. It participates in amino-acid biosynthesis; L-tryptophan biosynthesis; L-tryptophan from chorismate: step 4/5. This is Multifunctional tryptophan biosynthesis protein from Pichia angusta (Yeast).